The following is a 228-amino-acid chain: Ribonuclease HII (228 aa).

An RNase H type-2 domain is found at 1–210 (MKIAGIDEAG…LKKIAEKVES (210 aa)). Positions 7, 8, and 105 each coordinate a divalent metal cation.

The protein belongs to the RNase HII family. Monomer. Mn(2+) serves as cofactor. It depends on Mg(2+) as a cofactor.

The protein resides in the cytoplasm. The catalysed reaction is Endonucleolytic cleavage to 5'-phosphomonoester.. Endonuclease that specifically degrades the RNA of RNA-DNA hybrids. The polypeptide is Ribonuclease HII (rnhB) (Thermococcus kodakarensis (strain ATCC BAA-918 / JCM 12380 / KOD1) (Pyrococcus kodakaraensis (strain KOD1))).